A 338-amino-acid polypeptide reads, in one-letter code: Ornithine carbamoyltransferase (338 aa).

Carbamoyl phosphate is bound by residues 56–59 (STRT), Q83, R107, and 134–137 (HPTQ). L-ornithine-binding positions include N168, D232, and 236–237 (SM). Carbamoyl phosphate contacts are provided by residues 274–275 (CL) and R320.

The protein belongs to the aspartate/ornithine carbamoyltransferase superfamily. OTCase family.

It localises to the cytoplasm. The catalysed reaction is carbamoyl phosphate + L-ornithine = L-citrulline + phosphate + H(+). It participates in amino-acid biosynthesis; L-arginine biosynthesis; L-arginine from L-ornithine and carbamoyl phosphate: step 1/3. Its function is as follows. Reversibly catalyzes the transfer of the carbamoyl group from carbamoyl phosphate (CP) to the N(epsilon) atom of ornithine (ORN) to produce L-citrulline. The sequence is that of Ornithine carbamoyltransferase from Photorhabdus laumondii subsp. laumondii (strain DSM 15139 / CIP 105565 / TT01) (Photorhabdus luminescens subsp. laumondii).